The chain runs to 323 residues: Ribokinase (323 aa).

Residues 26-28, 54-58, and E155 contribute to the substrate site; these read MTD and GKGAN. ATP-binding positions include N200, 236–241, and T257; that span reads TLGASG. K(+) is bound by residues D264 and T266. ATP-binding positions include 269–270 and N296; that span reads GD. D270 is a binding site for substrate. D270 serves as the catalytic Proton acceptor. Residues S302, A305, G307, and S311 each coordinate K(+).

This sequence belongs to the carbohydrate kinase PfkB family. Ribokinase subfamily. In terms of assembly, homodimer. Mg(2+) serves as cofactor.

The protein localises to the cytoplasm. It is found in the nucleus. It carries out the reaction D-ribose + ATP = D-ribose 5-phosphate + ADP + H(+). It participates in carbohydrate metabolism; D-ribose degradation; D-ribose 5-phosphate from beta-D-ribopyranose: step 2/2. Activated by a monovalent cation that binds near, but not in, the active site. The most likely occupant of the site in vivo is potassium. Ion binding induces a conformational change that may alter substrate affinity. Competitively inhibited by phosphonoacetic acid, etidronate, 2-carboxethylphosphonic acid, N-(phosphonomethyl)glycine, N-(phosphonomethyl)iminodiacetic acid and clodronate. Catalyzes the phosphorylation of ribose at O-5 in a reaction requiring ATP and magnesium. The resulting D-ribose-5-phosphate can then be used either for sythesis of nucleotides, histidine, and tryptophan, or as a component of the pentose phosphate pathway. This Mus musculus (Mouse) protein is Ribokinase.